Here is a 457-residue protein sequence, read N- to C-terminus: tRNA modification GTPase MnmE (457 aa).

(6S)-5-formyl-5,6,7,8-tetrahydrofolate contacts are provided by arginine 22, glutamate 83, and arginine 122. The 160-residue stretch at 219–378 (GLATAIIGRP…LEEAIKTLFF (160 aa)) folds into the TrmE-type G domain. Residue asparagine 229 participates in K(+) binding. Residues 229–234 (NVGKSS), 248–254 (TDIAGTT), and 273–276 (DTAG) each bind GTP. Residue serine 233 coordinates Mg(2+). The K(+) site is built by threonine 248, isoleucine 250, and threonine 253. Threonine 254 is a Mg(2+) binding site. Lysine 457 is a (6S)-5-formyl-5,6,7,8-tetrahydrofolate binding site.

Belongs to the TRAFAC class TrmE-Era-EngA-EngB-Septin-like GTPase superfamily. TrmE GTPase family. In terms of assembly, homodimer. Heterotetramer of two MnmE and two MnmG subunits. Requires K(+) as cofactor.

Its subcellular location is the cytoplasm. Its function is as follows. Exhibits a very high intrinsic GTPase hydrolysis rate. Involved in the addition of a carboxymethylaminomethyl (cmnm) group at the wobble position (U34) of certain tRNAs, forming tRNA-cmnm(5)s(2)U34. This Listeria welshimeri serovar 6b (strain ATCC 35897 / DSM 20650 / CCUG 15529 / CIP 8149 / NCTC 11857 / SLCC 5334 / V8) protein is tRNA modification GTPase MnmE.